The chain runs to 191 residues: MAP6 domain-containing protein 1 (191 aa).

3 S-palmitoyl cysteine lipidation sites follow: Cys5, Cys10, and Cys11. The segment at 31-106 (HGYSDPGSEE…RGQSSAPPTR (76 aa)) is disordered. Phosphoserine occurs at positions 38 and 41. Mn regions lie at residues 123–136 (TTSYRQEFQAWTGV) and 158–170 (DPSPGASFQVPEV). Ser160 carries the phosphoserine modification.

The protein belongs to the STOP family. As to quaternary structure, interacts with calmodulin. Post-translationally, palmitoylated. Palmitoylation enhances association with microtubules. In terms of tissue distribution, expressed in brain. Found in neurons in primary cultures, but absent in glial cells.

The protein resides in the golgi apparatus. It is found in the cytoplasm. The protein localises to the cytoskeleton. Its function is as follows. May have microtubule-stabilizing activity. This chain is MAP6 domain-containing protein 1 (Map6d1), found in Mus musculus (Mouse).